Reading from the N-terminus, the 311-residue chain is tRNA-cytidine(32) 2-sulfurtransferase (311 aa).

The short motif at 47–52 (SGGKDS) is the PP-loop motif element. Residues Cys-122, Cys-125, and Cys-213 each coordinate [4Fe-4S] cluster.

This sequence belongs to the TtcA family. In terms of assembly, homodimer. The cofactor is Mg(2+). Requires [4Fe-4S] cluster as cofactor.

It is found in the cytoplasm. It catalyses the reaction cytidine(32) in tRNA + S-sulfanyl-L-cysteinyl-[cysteine desulfurase] + AH2 + ATP = 2-thiocytidine(32) in tRNA + L-cysteinyl-[cysteine desulfurase] + A + AMP + diphosphate + H(+). It functions in the pathway tRNA modification. Catalyzes the ATP-dependent 2-thiolation of cytidine in position 32 of tRNA, to form 2-thiocytidine (s(2)C32). The sulfur atoms are provided by the cysteine/cysteine desulfurase (IscS) system. The sequence is that of tRNA-cytidine(32) 2-sulfurtransferase from Klebsiella pneumoniae (strain 342).